The chain runs to 90 residues: Acylphosphatase (90 aa).

The Acylphosphatase-like domain maps to 3–90 (QRQFTVYGCV…RVFSDFTIER (88 aa)). Active-site residues include arginine 18 and asparagine 36.

This sequence belongs to the acylphosphatase family.

It catalyses the reaction an acyl phosphate + H2O = a carboxylate + phosphate + H(+). The protein is Acylphosphatase (acyP) of Actinobacillus succinogenes (strain ATCC 55618 / DSM 22257 / CCUG 43843 / 130Z).